The following is a 625-amino-acid chain: Probable inactive receptor kinase At5g16590 (625 aa).

An N-terminal signal peptide occupies residues 1–23 (MKNKTNLGLSVFFFFICLVSVTS). LRR repeat units follow at residues 88-111 (KLETLSFRFNALNGPLPPDFANLT), 112-134 (LLRYLYLQGNAFSGEIPSFLFTL), 136-158 (NIIRINLAQNNFLGRIPDNVNSA), 160-182 (RLATLYLQDNQLTGPIPEIKIKL), and 183-204 (QQFNVSSNQLNGSIPDPLSGMP). The helical transmembrane segment at 246–266 (AIVGIVIGCFVLLLVLFLIVF) threads the bilayer. The Protein kinase domain occupies 343–613 (KASAEVLGKG…PEVTRLIEEV (271 aa)). Serine 345 carries the post-translational modification Phosphoserine. Residues 349-357 (LGKGTFGSS) and lysine 371 each bind ATP. Phosphoserine is present on serine 422. Threonine 442 and threonine 496 each carry phosphothreonine. A Phosphoserine modification is found at serine 517. Phosphothreonine is present on threonine 593. Serine 619 and serine 624 each carry phosphoserine.

It belongs to the protein kinase superfamily. Ser/Thr protein kinase family.

The protein resides in the cell membrane. In terms of biological role, might be involved in early recognition of growth promoting fungi. Appears to be specific for P.indica. In Arabidopsis thaliana (Mouse-ear cress), this protein is Probable inactive receptor kinase At5g16590.